The following is a 472-amino-acid chain: Adenosylhomocysteinase (472 aa).

3 residues coordinate substrate: threonine 61, aspartate 139, and glutamate 198. Position 199–201 (199–201 (TTT)) interacts with NAD(+). Substrate contacts are provided by lysine 228 and aspartate 232. NAD(+) contacts are provided by residues asparagine 233, 262–267 (GFGDVG), glutamate 285, asparagine 320, 341–343 (IGH), and asparagine 386.

This sequence belongs to the adenosylhomocysteinase family. It depends on NAD(+) as a cofactor.

It is found in the cytoplasm. The enzyme catalyses S-adenosyl-L-homocysteine + H2O = L-homocysteine + adenosine. Its pathway is amino-acid biosynthesis; L-homocysteine biosynthesis; L-homocysteine from S-adenosyl-L-homocysteine: step 1/1. Its function is as follows. May play a key role in the regulation of the intracellular concentration of adenosylhomocysteine. The sequence is that of Adenosylhomocysteinase from Sphingopyxis alaskensis (strain DSM 13593 / LMG 18877 / RB2256) (Sphingomonas alaskensis).